Consider the following 218-residue polypeptide: uncharacterized protein (218 aa).

This is an uncharacterized protein from Mycoplasma genitalium (strain ATCC 33530 / DSM 19775 / NCTC 10195 / G37) (Mycoplasmoides genitalium).